A 658-amino-acid polypeptide reads, in one-letter code: Interferon-induced GTP-binding protein Mx1 (658 aa).

Position 1 is an N-acetylmethionine (Met-1). A disordered region spans residues Met-1–Leu-20. The Dynamin-type G domain occupies Asp-65–Pro-338. The tract at residues Gly-75–Ser-82 is G1 motif. Position 75 to 82 (Gly-75 to Ser-82) interacts with GTP. Positions Val-100 to Arg-102 are G2 motif. Residues Asp-176 to Gly-179 are G3 motif. GTP is bound by residues Asp-176 to Ile-180 and Thr-245 to Asp-248. Residues Thr-245–Asp-248 are G4 motif. The tract at residues Lys-277–Gly-280 is G5 motif. Positions Leu-339–Glu-364 are bundle signaling element (BSE). Residues Glu-364–Cys-531 are middle domain. A stalk region spans residues Glu-365–Glu-628. Positions Lys-551 to Lys-554 are critical for lipid-binding. Residues Leu-570–Gly-658 form the GED domain.

Belongs to the TRAFAC class dynamin-like GTPase superfamily. Dynamin/Fzo/YdjA family. In terms of assembly, homooligomer. Oligomerizes into multimeric filamentous or ring-like structures by virtue of its stalk domain. Oligomerization is critical for GTPase activity, protein stability, and recognition of viral target structures. Interacts with TRPC1, TRPC3, TRPC4, TRPC5, TRPC6 and TRPC7. Interacts with HSPA5. Interacts with TUBB/TUBB5. Interacts with DDX39A and DDX39B. ISGylated.

It localises to the cytoplasm. The protein resides in the endoplasmic reticulum membrane. The protein localises to the perinuclear region. Interferon-induced dynamin-like GTPase with antiviral activity. The protein is Interferon-induced GTP-binding protein Mx1 (MX1) of Eumetopias jubatus (Steller sea lion).